The sequence spans 275 residues: Hydroxyethylthiazole kinase (275 aa).

Residue methionine 50 participates in substrate binding. ATP contacts are provided by arginine 126 and serine 171. Alanine 200 is a substrate binding site.

This sequence belongs to the Thz kinase family. It depends on Mg(2+) as a cofactor.

The catalysed reaction is 5-(2-hydroxyethyl)-4-methylthiazole + ATP = 4-methyl-5-(2-phosphooxyethyl)-thiazole + ADP + H(+). The protein operates within cofactor biosynthesis; thiamine diphosphate biosynthesis; 4-methyl-5-(2-phosphoethyl)-thiazole from 5-(2-hydroxyethyl)-4-methylthiazole: step 1/1. Functionally, catalyzes the phosphorylation of the hydroxyl group of 4-methyl-5-beta-hydroxyethylthiazole (THZ). This is Hydroxyethylthiazole kinase from Acinetobacter baumannii (strain SDF).